Consider the following 511-residue polypeptide: Histidine ammonia-lyase (511 aa).

The segment at residues 142–144 (ASG) is a cross-link (5-imidazolinone (Ala-Gly)). At S143 the chain carries 2,3-didehydroalanine (Ser).

The protein belongs to the PAL/histidase family. Post-translationally, contains an active site 4-methylidene-imidazol-5-one (MIO), which is formed autocatalytically by cyclization and dehydration of residues Ala-Ser-Gly.

The protein resides in the cytoplasm. It carries out the reaction L-histidine = trans-urocanate + NH4(+). The protein operates within amino-acid degradation; L-histidine degradation into L-glutamate; N-formimidoyl-L-glutamate from L-histidine: step 1/3. This chain is Histidine ammonia-lyase, found in Brucella abortus (strain S19).